Consider the following 487-residue polypeptide: Cytochrome P450 2C21 (487 aa).

Residue Cys-432 coordinates heme.

This sequence belongs to the cytochrome P450 family. Heme serves as cofactor. As to expression, liver.

It is found in the endoplasmic reticulum membrane. It localises to the microsome membrane. It catalyses the reaction an organic molecule + reduced [NADPH--hemoprotein reductase] + O2 = an alcohol + oxidized [NADPH--hemoprotein reductase] + H2O + H(+). Cytochromes P450 are a group of heme-thiolate monooxygenases. In liver microsomes, this enzyme is involved in an NADPH-dependent electron transport pathway. It oxidizes a variety of structurally unrelated compounds, including steroids, fatty acids, and xenobiotics. Showed testosterone hydrolase activity. The protein is Cytochrome P450 2C21 (CYP2C21) of Canis lupus familiaris (Dog).